A 214-amino-acid chain; its full sequence is Adenylate kinase (214 aa).

15-20 (GAGKGT) provides a ligand contact to ATP. The segment at 35-64 (ASGDLFREAIKNQSVIGRKIAAIISQGGYV) is NMP. Residues Ser36, Arg41, 62–64 (GYV), 90–93 (GYPR), and Gln97 contribute to the AMP site. Residues 127–164 (NRVICNNCNSVYNLLFQKPLVENSCDQCSAKLVKRSDD) are LID. Arg128 serves as a coordination point for ATP. The Zn(2+) site is built by Cys131 and Cys134. Residue 137-138 (VY) participates in ATP binding. Residues Cys151 and Cys154 each coordinate Zn(2+). Arg161 and Arg172 together coordinate AMP. Leu200 is an ATP binding site.

This sequence belongs to the adenylate kinase family. As to quaternary structure, monomer.

The protein localises to the cytoplasm. It carries out the reaction AMP + ATP = 2 ADP. It functions in the pathway purine metabolism; AMP biosynthesis via salvage pathway; AMP from ADP: step 1/1. Its function is as follows. Catalyzes the reversible transfer of the terminal phosphate group between ATP and AMP. Plays an important role in cellular energy homeostasis and in adenine nucleotide metabolism. The polypeptide is Adenylate kinase (Mycoplasma genitalium (strain ATCC 33530 / DSM 19775 / NCTC 10195 / G37) (Mycoplasmoides genitalium)).